Here is a 249-residue protein sequence, read N- to C-terminus: (2S)-[(R)-hydroxy(phenyl)methyl]succinyl-CoA dehydrogenase subunit BbsC (249 aa).

The protein belongs to the short-chain dehydrogenases/reductases (SDR) family. Heterotetramer composed of 2 inactive BbsC subunits and 2 active BbsD subunits.

It participates in xenobiotic degradation; toluene degradation. Its function is as follows. Involved in an anaerobic toluene degradation pathway. Catalytically inactive subunit, which is probably required for the structural and/or regulatory integrity of the catalytic subunit BbsD. This subunit cannot bind NAD(+) or substrate. In Thauera aromatica, this protein is (2S)-[(R)-hydroxy(phenyl)methyl]succinyl-CoA dehydrogenase subunit BbsC.